Reading from the N-terminus, the 425-residue chain is Serine hydroxymethyltransferase (425 aa).

(6S)-5,6,7,8-tetrahydrofolate is bound by residues Leu125 and 129–131 (GHL). N6-(pyridoxal phosphate)lysine is present on Lys234.

Belongs to the SHMT family. As to quaternary structure, homodimer. Requires pyridoxal 5'-phosphate as cofactor.

It localises to the cytoplasm. It catalyses the reaction (6R)-5,10-methylene-5,6,7,8-tetrahydrofolate + glycine + H2O = (6S)-5,6,7,8-tetrahydrofolate + L-serine. It participates in one-carbon metabolism; tetrahydrofolate interconversion. It functions in the pathway amino-acid biosynthesis; glycine biosynthesis; glycine from L-serine: step 1/1. Functionally, catalyzes the reversible interconversion of serine and glycine with tetrahydrofolate (THF) serving as the one-carbon carrier. This reaction serves as the major source of one-carbon groups required for the biosynthesis of purines, thymidylate, methionine, and other important biomolecules. Also exhibits THF-independent aldolase activity toward beta-hydroxyamino acids, producing glycine and aldehydes, via a retro-aldol mechanism. In Marinomonas sp. (strain MWYL1), this protein is Serine hydroxymethyltransferase.